The following is a 199-amino-acid chain: NAD(P)H dehydrogenase (quinone) (199 aa).

The Flavodoxin-like domain maps to 4-190 (VLVLYYSSYG…TGARYQGRKI (187 aa)). FMN is bound by residues 10–15 (SSYGHL) and 78–80 (TRF). Tyrosine 12 serves as a coordination point for NAD(+). Tryptophan 98 is a binding site for substrate. Residues 113–119 (STATQHG) and histidine 134 contribute to the FMN site.

Belongs to the WrbA family. FMN serves as cofactor.

It carries out the reaction a quinone + NADH + H(+) = a quinol + NAD(+). It catalyses the reaction a quinone + NADPH + H(+) = a quinol + NADP(+). This is NAD(P)H dehydrogenase (quinone) from Caulobacter vibrioides (strain ATCC 19089 / CIP 103742 / CB 15) (Caulobacter crescentus).